Here is a 480-residue protein sequence, read N- to C-terminus: Uridine/deoxyuridine transporter (480 aa).

The next 14 membrane-spanning stretches (helical) occupy residues 14 to 34 (VGSI…FQLN), 55 to 75 (SIAL…LFLP), 93 to 113 (LTMI…LMIG), 115 to 135 (ILQG…HVKV), 147 to 167 (ILTS…GWLV), 174 to 194 (SVFF…SFGT), 207 to 227 (WTGV…VNAL), 239 to 259 (WLLA…FWQV), 280 to 300 (GLLI…NGII), 320 to 340 (LVTL…SGFL), 358 to 378 (IIGI…LLLL), 382 to 402 (FIGI…GIVL), 417 to 437 (GMFN…PTVL), and 449 to 469 (ISGI…SFLI).

It belongs to the major facilitator superfamily. EmrB family.

Its subcellular location is the cell membrane. Its function is as follows. Responsible for the uptake of uridine and deoxyuridine. Not involved in purine nucleoside uptake. This chain is Uridine/deoxyuridine transporter, found in Lactococcus lactis subsp. cremoris (strain MG1363).